The primary structure comprises 244 residues: tRNA1(Val) (adenine(37)-N6)-methyltransferase (244 aa).

It belongs to the methyltransferase superfamily. tRNA (adenine-N(6)-)-methyltransferase family.

The protein localises to the cytoplasm. The catalysed reaction is adenosine(37) in tRNA1(Val) + S-adenosyl-L-methionine = N(6)-methyladenosine(37) in tRNA1(Val) + S-adenosyl-L-homocysteine + H(+). Functionally, specifically methylates the adenine in position 37 of tRNA(1)(Val) (anticodon cmo5UAC). The sequence is that of tRNA1(Val) (adenine(37)-N6)-methyltransferase from Shewanella sediminis (strain HAW-EB3).